Consider the following 308-residue polypeptide: Solute carrier family 25 member 47 (308 aa).

Solcar repeat units follow at residues M1–H80, P93–W206, and P215–L302. 6 consecutive transmembrane segments (helical) span residues F3–V23, V49–V69, I98–T116, G190–A210, V217–P237, and V273–F293.

The protein belongs to the mitochondrial carrier (TC 2.A.29) family. In terms of tissue distribution, specifically expressed in liver.

It localises to the mitochondrion inner membrane. It is found in the mitochondrion outer membrane. It catalyses the reaction NAD(+)(in) = NAD(+)(out). The enzyme catalyses acetyl-CoA(in) = acetyl-CoA(out). Mitochondrial NAD(+) transporter that acts as a 'metabolic gate' in hepatic lipogenesis. Provides NAD(+) substrate to mitochondrial SIRT3 deacetylase and enables its NAD(+)-dependent activities in mitochondrial energy metabolism. This triggers downstream activation of PRKAA1/AMPK-alpha signaling cascade that negatively regulates sterol regulatory element-binding protein (SREBP) transcriptional activities and ATP-consuming lipogenesis to restore cellular energy balance. May transport other mitochondrial metabolites having an aromatic nucleotide and phosphate groups, such as acetyl-CoA. Does not transport amino acids. The transport mechanism remains to be elucidated. The sequence is that of Solute carrier family 25 member 47 from Homo sapiens (Human).